The primary structure comprises 324 residues: Putative transport protein TM_1187 (324 aa).

8 helical membrane-spanning segments follow: residues 12–32, 62–82, 105–125, 131–151, 190–210, 227–247, 252–272, and 285–305; these read LYLVLFLVLAKLSPFIITALI, ISNVLVFLTIAYSAVNFFPVI, IPGWLSSILSSISASFSEGAL, IVGYVPSFITAAILIVITAFI, GGQVLVAIFVGLFVGFGAFIF, FVPYLGVVISAIPLLMLAFSV, GLLIGTIILVAANQLEMWVLA, and FIILIMILILGDLFSFGGVLI.

The protein belongs to the autoinducer-2 exporter (AI-2E) (TC 2.A.86) family.

It localises to the cell membrane. This chain is Putative transport protein TM_1187, found in Thermotoga maritima (strain ATCC 43589 / DSM 3109 / JCM 10099 / NBRC 100826 / MSB8).